Consider the following 393-residue polypeptide: Methylthioribose kinase (393 aa).

Residues Asn38, Lys53, and Glu107 to Leu109 each bind ATP. Asp225 contributes to the substrate binding site. Asp242–Glu244 lines the ATP pocket. Arg332 is a binding site for substrate.

Belongs to the methylthioribose kinase family. Homodimer.

It catalyses the reaction 5-(methylsulfanyl)-D-ribose + ATP = 5-(methylsulfanyl)-alpha-D-ribose 1-phosphate + ADP + H(+). It functions in the pathway amino-acid biosynthesis; L-methionine biosynthesis via salvage pathway; S-methyl-5-thio-alpha-D-ribose 1-phosphate from S-methyl-5'-thioadenosine (hydrolase route): step 2/2. In terms of biological role, catalyzes the phosphorylation of methylthioribose into methylthioribose-1-phosphate. This is Methylthioribose kinase from Bacillus cereus (strain 03BB102).